The following is a 391-amino-acid chain: Cyclin-B1-2 (391 aa).

It belongs to the cyclin family. Cyclin AB subfamily.

The sequence is that of Cyclin-B1-2 (CYCB1-2) from Oryza sativa subsp. japonica (Rice).